We begin with the raw amino-acid sequence, 136 residues long: Large ribosomal subunit protein uL16 (136 aa).

Belongs to the universal ribosomal protein uL16 family. Part of the 50S ribosomal subunit.

Binds 23S rRNA and is also seen to make contacts with the A and possibly P site tRNAs. The sequence is that of Large ribosomal subunit protein uL16 from Wigglesworthia glossinidia brevipalpis.